The primary structure comprises 414 residues: Methyltransferase-like protein 2 (414 aa).

Residues 56–77 are disordered; it reads LNQHSSESNPKKRKRKQKNSSF.

This sequence belongs to the MT-A70-like family.

Probable methyltransferase. The sequence is that of Methyltransferase-like protein 2 from Arabidopsis thaliana (Mouse-ear cress).